A 146-amino-acid chain; its full sequence is MRNEMHLQFSALSQNESFARVTVAAFVAQLDPTLDELTEIKTVVSEAVTNAIIHGYENDPSGVVYISVIIEGHTVHLTIRDHGKGIENVEEARQPLFTTKPELERSGMGFTIMENFMDEVNIYSKVNEGTTVELIKHLTKSKALCN.

The protein belongs to the anti-sigma-factor family.

It catalyses the reaction L-seryl-[protein] + ATP = O-phospho-L-seryl-[protein] + ADP + H(+). The enzyme catalyses L-threonyl-[protein] + ATP = O-phospho-L-threonyl-[protein] + ADP + H(+). Its function is as follows. Binds to sigma F and blocks its ability to form an RNA polymerase holoenzyme (E-sigma F). Phosphorylates SpoIIAA on a serine residue. This phosphorylation may enable SpoIIAA to act as an anti-anti-sigma factor that counteracts SpoIIAB and thus releases sigma F from inhibition. This Anoxybacillus flavithermus (strain DSM 21510 / WK1) protein is Anti-sigma F factor.